Here is a 197-residue protein sequence, read N- to C-terminus: Sec-independent protein translocase protein TatB (197 aa).

The chain crosses the membrane as a helical span at residues 1 to 21 (MFDIGFGELLLVMVLGLIVLG). Residues 93 to 197 (KRGYTETPSP…ASARQPSDSR (105 aa)) are disordered. Composition is skewed to basic and acidic residues over residues 104–113 (KSDDPKKSGD) and 160–169 (NHNDGRHATS). A compositionally biased stretch (low complexity) spans 180–197 (PEQSQPSAASARQPSDSR).

The protein belongs to the TatB family. The Tat system comprises two distinct complexes: a TatABC complex, containing multiple copies of TatA, TatB and TatC subunits, and a separate TatA complex, containing only TatA subunits. Substrates initially bind to the TatABC complex, which probably triggers association of the separate TatA complex to form the active translocon.

Its subcellular location is the cell inner membrane. Its function is as follows. Part of the twin-arginine translocation (Tat) system that transports large folded proteins containing a characteristic twin-arginine motif in their signal peptide across membranes. Together with TatC, TatB is part of a receptor directly interacting with Tat signal peptides. TatB may form an oligomeric binding site that transiently accommodates folded Tat precursor proteins before their translocation. This chain is Sec-independent protein translocase protein TatB, found in Pectobacterium atrosepticum (strain SCRI 1043 / ATCC BAA-672) (Erwinia carotovora subsp. atroseptica).